Consider the following 174-residue polypeptide: Small ribosomal subunit protein uS12m (174 aa).

It belongs to the universal ribosomal protein uS12 family. As to quaternary structure, component of the mitochondrial small ribosomal subunit (mt-SSU). Mature N.crassa 74S mitochondrial ribosomes consist of a small (37S) and a large (54S) subunit. The 37S small subunit contains a 16S ribosomal RNA (16S mt-rRNA) and 32 different proteins. The 54S large subunit contains a 23S rRNA (23S mt-rRNA) and 42 different proteins. uS12m forms part of the decoding center of the mt-SSU.

It localises to the mitochondrion. Functionally, component of the mitochondrial ribosome (mitoribosome), a dedicated translation machinery responsible for the synthesis of mitochondrial genome-encoded proteins, including at least some of the essential transmembrane subunits of the mitochondrial respiratory chain. The mitoribosomes are attached to the mitochondrial inner membrane and translation products are cotranslationally integrated into the membrane. This Neurospora crassa (strain ATCC 24698 / 74-OR23-1A / CBS 708.71 / DSM 1257 / FGSC 987) protein is Small ribosomal subunit protein uS12m (mrps12).